A 45-amino-acid polypeptide reads, in one-letter code: Photosystem II reaction center protein K (45 aa).

Residues 1 to 8 (MLMSLFLA) constitute a propeptide that is removed on maturation. A helical membrane pass occupies residues 23–43 (ILPIIPLFFLLLAFVWQAAIG).

Belongs to the PsbK family. As to quaternary structure, PSII is composed of 1 copy each of membrane proteins PsbA, PsbB, PsbC, PsbD, PsbE, PsbF, PsbH, PsbI, PsbJ, PsbK, PsbL, PsbM, PsbT, PsbX, PsbY, PsbZ, Psb30/Ycf12, at least 3 peripheral proteins of the oxygen-evolving complex and a large number of cofactors. It forms dimeric complexes.

The protein localises to the plastid. Its subcellular location is the cyanelle thylakoid membrane. In terms of biological role, one of the components of the core complex of photosystem II (PSII). PSII is a light-driven water:plastoquinone oxidoreductase that uses light energy to abstract electrons from H(2)O, generating O(2) and a proton gradient subsequently used for ATP formation. It consists of a core antenna complex that captures photons, and an electron transfer chain that converts photonic excitation into a charge separation. The protein is Photosystem II reaction center protein K of Cyanophora paradoxa.